A 240-amino-acid chain; its full sequence is Phosphatidylserine decarboxylase proenzyme (240 aa).

The Schiff-base intermediate with substrate; via pyruvic acid role is filled by Ser198. Ser198 bears the Pyruvic acid (Ser); by autocatalysis mark.

This sequence belongs to the phosphatidylserine decarboxylase family. PSD-A subfamily. Heterodimer of a large membrane-associated beta subunit and a small pyruvoyl-containing alpha subunit. Pyruvate serves as cofactor. Is synthesized initially as an inactive proenzyme. Formation of the active enzyme involves a self-maturation process in which the active site pyruvoyl group is generated from an internal serine residue via an autocatalytic post-translational modification. Two non-identical subunits are generated from the proenzyme in this reaction, and the pyruvate is formed at the N-terminus of the alpha chain, which is derived from the carboxyl end of the proenzyme. The post-translation cleavage follows an unusual pathway, termed non-hydrolytic serinolysis, in which the side chain hydroxyl group of the serine supplies its oxygen atom to form the C-terminus of the beta chain, while the remainder of the serine residue undergoes an oxidative deamination to produce ammonia and the pyruvoyl prosthetic group on the alpha chain.

The protein resides in the cell membrane. The catalysed reaction is a 1,2-diacyl-sn-glycero-3-phospho-L-serine + H(+) = a 1,2-diacyl-sn-glycero-3-phosphoethanolamine + CO2. It participates in phospholipid metabolism; phosphatidylethanolamine biosynthesis; phosphatidylethanolamine from CDP-diacylglycerol: step 2/2. Functionally, catalyzes the formation of phosphatidylethanolamine (PtdEtn) from phosphatidylserine (PtdSer). This is Phosphatidylserine decarboxylase proenzyme from Paramagnetospirillum magneticum (strain ATCC 700264 / AMB-1) (Magnetospirillum magneticum).